The chain runs to 102 residues: Large ribosomal subunit protein bL21 (102 aa).

This sequence belongs to the bacterial ribosomal protein bL21 family. Part of the 50S ribosomal subunit. Contacts protein L20.

Functionally, this protein binds to 23S rRNA in the presence of protein L20. The chain is Large ribosomal subunit protein bL21 from Finegoldia magna (strain ATCC 29328 / DSM 20472 / WAL 2508) (Peptostreptococcus magnus).